The primary structure comprises 101 residues: MIPGEIIAASGDIELNAGAPTVTLEVSNTGDRPVQVGSHYHFAETNAGLSFDRAVARGKRLDIPAGTAVRFEPGQTRSVTLIPLSGKREVYGFRQLVMGKL.

This sequence belongs to the urease beta subunit family. As to quaternary structure, heterotrimer of UreA (gamma), UreB (beta) and UreC (alpha) subunits. Three heterotrimers associate to form the active enzyme.

Its subcellular location is the cytoplasm. It catalyses the reaction urea + 2 H2O + H(+) = hydrogencarbonate + 2 NH4(+). It functions in the pathway nitrogen metabolism; urea degradation; CO(2) and NH(3) from urea (urease route): step 1/1. The polypeptide is Urease subunit beta (Rhizobium johnstonii (strain DSM 114642 / LMG 32736 / 3841) (Rhizobium leguminosarum bv. viciae)).